A 183-amino-acid polypeptide reads, in one-letter code: Threonylcarbamoyl-AMP synthase (183 aa).

Residues methionine 1–glycine 183 form the YrdC-like domain.

This sequence belongs to the SUA5 family. TsaC subfamily.

The protein localises to the cytoplasm. The catalysed reaction is L-threonine + hydrogencarbonate + ATP = L-threonylcarbamoyladenylate + diphosphate + H2O. Its function is as follows. Required for the formation of a threonylcarbamoyl group on adenosine at position 37 (t(6)A37) in tRNAs that read codons beginning with adenine. Catalyzes the conversion of L-threonine, HCO(3)(-)/CO(2) and ATP to give threonylcarbamoyl-AMP (TC-AMP) as the acyladenylate intermediate, with the release of diphosphate. This chain is Threonylcarbamoyl-AMP synthase, found in Haemophilus influenzae (strain PittEE).